The chain runs to 250 residues: NADH-quinone oxidoreductase subunit B 2 (250 aa).

[4Fe-4S] cluster contacts are provided by cysteine 41, cysteine 42, cysteine 107, and cysteine 137.

The protein belongs to the complex I 20 kDa subunit family. As to quaternary structure, NDH-1 is composed of 14 different subunits. Subunits NuoB, C, D, E, F, and G constitute the peripheral sector of the complex. [4Fe-4S] cluster serves as cofactor.

It is found in the cell membrane. The catalysed reaction is a quinone + NADH + 5 H(+)(in) = a quinol + NAD(+) + 4 H(+)(out). NDH-1 shuttles electrons from NADH, via FMN and iron-sulfur (Fe-S) centers, to quinones in the respiratory chain. The immediate electron acceptor for the enzyme in this species is believed to be ubiquinone. Couples the redox reaction to proton translocation (for every two electrons transferred, four hydrogen ions are translocated across the cytoplasmic membrane), and thus conserves the redox energy in a proton gradient. The sequence is that of NADH-quinone oxidoreductase subunit B 2 from Herpetosiphon aurantiacus (strain ATCC 23779 / DSM 785 / 114-95).